A 363-amino-acid polypeptide reads, in one-letter code: Phosphoserine aminotransferase (363 aa).

L-glutamate is bound by residues Ser9 and Arg42. Pyridoxal 5'-phosphate is bound by residues 76–77 (AR), Trp102, Thr154, Asp174, and Gln197. Residue Lys198 is modified to N6-(pyridoxal phosphate)lysine. Pyridoxal 5'-phosphate is bound at residue 240 to 241 (NT).

The protein belongs to the class-V pyridoxal-phosphate-dependent aminotransferase family. SerC subfamily. As to quaternary structure, homodimer. Pyridoxal 5'-phosphate is required as a cofactor.

The protein localises to the cytoplasm. It catalyses the reaction O-phospho-L-serine + 2-oxoglutarate = 3-phosphooxypyruvate + L-glutamate. The enzyme catalyses 4-(phosphooxy)-L-threonine + 2-oxoglutarate = (R)-3-hydroxy-2-oxo-4-phosphooxybutanoate + L-glutamate. The protein operates within amino-acid biosynthesis; L-serine biosynthesis; L-serine from 3-phospho-D-glycerate: step 2/3. Its pathway is cofactor biosynthesis; pyridoxine 5'-phosphate biosynthesis; pyridoxine 5'-phosphate from D-erythrose 4-phosphate: step 3/5. Its function is as follows. Catalyzes the reversible conversion of 3-phosphohydroxypyruvate to phosphoserine and of 3-hydroxy-2-oxo-4-phosphonooxybutanoate to phosphohydroxythreonine. The chain is Phosphoserine aminotransferase from Baumannia cicadellinicola subsp. Homalodisca coagulata.